A 405-amino-acid chain; its full sequence is MIFTNNIAAFQNVVLVKKVKIVLLIFYGSIMFSMTQVNKEECDYYQNLNLGEIYYIYNPRYPLPYSGSKCTWTITSYHRINLKCSLVEFSENKNCNAGSLTVKKNFANKYCGNITLNIESTSNKMTVILTPPGRFFCEVRPIKRVKDSTNCNCGWKNPSRIVGGTNTGINEFPMMAGIKRTYEPGMICGATIISKRYVLTAAHCIIDENTTKLAIVVGEHDWSSKTETNATVLHSINKVIIHPKYDIIEKDDWQINDIALLKTEKDIKFGDKVGPACLPFQHFLDSFAGSDVTVLGWGHTSFNGMLSHILQKTTLNMLTQVECYKYYGNIMVNAMCAYAKGKDACQMDSGGPVLWQNPRTKRLVNIGIISWGAECGKYPNGNTKVGSYIDWIVSQTPDAEYCVIE.

Residues 1-35 (MIFTNNIAAFQNVVLVKKVKIVLLIFYGSIMFSMT) form the signal peptide. 2 cysteine pairs are disulfide-bonded: cysteine 42-cysteine 70 and cysteine 95-cysteine 111. Positions 42–147 (CDYYQNLNLG…EVRPIKRVKD (106 aa)) constitute a CUB domain. N-linked (GlcNAc...) asparagine glycosylation occurs at asparagine 113. In terms of domain architecture, Peptidase S1 spans 161–397 (IVGGTNTGIN…YIDWIVSQTP (237 aa)). Cysteine 188 and cysteine 204 form a disulfide bridge. Histidine 203 (charge relay system) is an active-site residue. N-linked (GlcNAc...) asparagine glycosylation is found at asparagine 209 and asparagine 229. The active-site Charge relay system is aspartate 257. Cystine bridges form between cysteine 323-cysteine 336 and cysteine 345-cysteine 375. Residue serine 349 is the Charge relay system of the active site.

This sequence belongs to the peptidase S1 family. As to expression, expressed by the venom duct.

The protein localises to the secreted. This Apis mellifera (Honeybee) protein is Venom serine protease 34.